The following is a 336-amino-acid chain: NADH-quinone oxidoreductase subunit H (336 aa).

A run of 8 helical transmembrane segments spans residues tryptophan 17–isoleucine 37, alanine 85–methionine 105, leucine 116–threonine 136, alanine 154–leucine 174, valine 190–glutamate 210, valine 247–isoleucine 267, isoleucine 274–isoleucine 294, and phenylalanine 309–valine 329.

It belongs to the complex I subunit 1 family. In terms of assembly, NDH-1 is composed of 14 different subunits. Subunits NuoA, H, J, K, L, M, N constitute the membrane sector of the complex.

It localises to the cell membrane. It catalyses the reaction a quinone + NADH + 5 H(+)(in) = a quinol + NAD(+) + 4 H(+)(out). NDH-1 shuttles electrons from NADH, via FMN and iron-sulfur (Fe-S) centers, to quinones in the respiratory chain. The immediate electron acceptor for the enzyme in this species is believed to be ubiquinone. Couples the redox reaction to proton translocation (for every two electrons transferred, four hydrogen ions are translocated across the cytoplasmic membrane), and thus conserves the redox energy in a proton gradient. This subunit may bind ubiquinone. The polypeptide is NADH-quinone oxidoreductase subunit H (Brevibacillus brevis (strain 47 / JCM 6285 / NBRC 100599)).